Consider the following 624-residue polypeptide: Probable potassium transport system protein Kup 1 (624 aa).

A run of 12 helical transmembrane segments spans residues 10–30, 48–68, 94–114, 133–153, 159–179, 210–230, 242–262, 270–290, 331–351, 363–383, 388–408, and 413–433; these read LALGALGVVFGDIGTSPLYAL, LSLIFWSLIIVVSFKYLMIIF, PLFYIVAIFGAGLLLGDGMLT, LYPYVLPIASLILILLFSLQA, IGYLFGPLILVWFITIAILGI, LLLGGIFLVVTGGEALFADIG, FFAALPCLLLNYFGQGANLIV, PFFMIAPSWFYLPLIIIATVA, IYVPQINFILFIGTMAFCLAF, IAVNLEMLLVDAMVAYAAISI, IFNVMFLFGLFLLIDLAFLGA, and FITGGWVPIVLAFFIAFIMYS.

It belongs to the HAK/KUP transporter (TC 2.A.72) family.

The protein resides in the cell inner membrane. It carries out the reaction K(+)(in) + H(+)(in) = K(+)(out) + H(+)(out). Transport of potassium into the cell. Likely operates as a K(+):H(+) symporter. The sequence is that of Probable potassium transport system protein Kup 1 from Legionella pneumophila (strain Lens).